The primary structure comprises 122 residues: Large ribosomal subunit protein uL18 (122 aa).

The protein belongs to the universal ribosomal protein uL18 family. As to quaternary structure, part of the 50S ribosomal subunit; part of the 5S rRNA/L5/L18/L25 subcomplex. Contacts the 5S and 23S rRNAs.

In terms of biological role, this is one of the proteins that bind and probably mediate the attachment of the 5S RNA into the large ribosomal subunit, where it forms part of the central protuberance. The protein is Large ribosomal subunit protein uL18 of Prochlorococcus marinus (strain MIT 9215).